The sequence spans 333 residues: tRNA N6-adenosine threonylcarbamoyltransferase (333 aa).

Residues H111 and H115 each contribute to the Fe cation site. Residues 134–138, D167, G180, and N273 contribute to the substrate site; that span reads LASGG. Fe cation is bound at residue D301.

The protein belongs to the KAE1 / TsaD family. Fe(2+) serves as cofactor.

It localises to the cytoplasm. The catalysed reaction is L-threonylcarbamoyladenylate + adenosine(37) in tRNA = N(6)-L-threonylcarbamoyladenosine(37) in tRNA + AMP + H(+). Required for the formation of a threonylcarbamoyl group on adenosine at position 37 (t(6)A37) in tRNAs that read codons beginning with adenine. Is involved in the transfer of the threonylcarbamoyl moiety of threonylcarbamoyl-AMP (TC-AMP) to the N6 group of A37, together with TsaE and TsaB. TsaD likely plays a direct catalytic role in this reaction. This chain is tRNA N6-adenosine threonylcarbamoyltransferase, found in Desulforapulum autotrophicum (strain ATCC 43914 / DSM 3382 / VKM B-1955 / HRM2) (Desulfobacterium autotrophicum).